A 538-amino-acid polypeptide reads, in one-letter code: MEDSTEDIIKSFTLEQSPEIKPKPKSKTSDLTDIVYAMDDDSIKMKKFTIFDDKYDQNISDSEHDLTPIKRKRQSAQSAPPPPATKFSSSIPQKPTLSPKKLATSPTKNYTDHINQLRSGPNSPKKYQDDENIRSLKYEIKRLKQEQNLKLENLQHKIDYLTNERDELQNQLTSMSFENDKLTKKNRSLSHENNHLTLENSKLKTKEYSNEELQSENNKLQRVNSTLRNERDELVKDFNITRDKLKKYYDLYLHCQKAHAKEMKKRIEVDGDKPISDKPMADNSTNQELVDVLKKLSEMMIEQKKISEPSAAVEKDTTSEDKTPPIPNTANSSDTPRMVSDFLEDFIKRVFEEMSSNNKNTLSPKQAINSQTYSQPNNFSNNTVPPSQSAAYNPSNSQPAPPPQPATNFYSSSTPNTNGYNQSSQSDERPETFELPHVAKDHWLQRPTSERSTQSTKYMKMDPEDIRKLVSVITDQLKKEQKSEKPSNVVEMETPVEKCQCCHGNPRNVTDTNNNQKLCQSCLNKGDFTMSEFMGRSN.

2 disordered regions span residues 1–31 and 57–129; these read MEDS…TSDL and QNIS…KYQD. 2 stretches are compositionally biased toward basic and acidic residues: residues 18–30 and 57–68; these read PEIK…KTSD and QNISDSEHDLTP. Polar residues-rich tracts occupy residues 86–96 and 104–122; these read KFSSSIPQKPT and TSPT…SGPN. Residues 144 to 237 are a coiled coil; that stretch reads KQEQNLKLEN…RNERDELVKD (94 aa). Positions 304 to 323 are enriched in basic and acidic residues; it reads KKISEPSAAVEKDTTSEDKT. 2 disordered regions span residues 304–338 and 355–458; these read KKIS…TPRM and SSNN…STKY. Polar residues-rich tracts occupy residues 355 to 392 and 407 to 425; these read SSNN…SAAY and TNFY…QSSQ. Basic and acidic residues predominate over residues 426–444; sequence SDERPETFELPHVAKDHWL. Over residues 446–457 the composition is skewed to polar residues; it reads RPTSERSTQSTK.

The protein resides in the cytoplasm. Its subcellular location is the cytoskeleton. It localises to the microtubule organizing center. It is found in the spindle pole body. In terms of biological role, plays a role in mitotic spindle pole body organization, possibly at the point of spindle pole body separation. Required for mitotic exit. In Candida albicans (strain SC5314 / ATCC MYA-2876) (Yeast), this protein is Spindle pole body protein CSA6.